Consider the following 497-residue polypeptide: NADH-quinone oxidoreductase subunit N (497 aa).

A run of 14 helical transmembrane segments spans residues 14–34 (LMAM…MLSI), 45–65 (SLTV…WGLF), 86–106 (IFYS…AYPW), 116–136 (EFYL…SAQH), 137–157 (LAAV…LLGY), 171–191 (YFVL…MLYA), 215–235 (ILAG…LVPF), 253–273 (FLGT…FLYV), 281–301 (LNTA…LMAL), 309–329 (LLGY…IALH), 338–358 (VAVY…VVSL), 385–405 (AAVM…LGFI), 420–439 (WVLT…YYLR), and 461–481 (AFTA…VFGI).

Belongs to the complex I subunit 2 family. NDH-1 is composed of 13 different subunits. Subunits NuoA, H, J, K, L, M, N constitute the membrane sector of the complex.

The protein resides in the cell membrane. The catalysed reaction is a quinone + NADH + 5 H(+)(in) = a quinol + NAD(+) + 4 H(+)(out). Its function is as follows. NDH-1 shuttles electrons from NADH, via FMN and iron-sulfur (Fe-S) centers, to quinones in the respiratory chain. The immediate electron acceptor for the enzyme in this species is believed to be ubiquinone. Couples the redox reaction to proton translocation (for every two electrons transferred, four hydrogen ions are translocated across the cytoplasmic membrane), and thus conserves the redox energy in a proton gradient. This chain is NADH-quinone oxidoreductase subunit N, found in Hamiltonella defensa subsp. Acyrthosiphon pisum (strain 5AT).